The sequence spans 344 residues: uncharacterized protein (344 aa).

The protein belongs to the glycosyltransferase 28 family.

This is an uncharacterized protein from Methanopyrus kandleri (strain AV19 / DSM 6324 / JCM 9639 / NBRC 100938).